The primary structure comprises 675 residues: Methionine--tRNA ligase (675 aa).

Residues 15–25 carry the 'HIGH' region motif; it reads PYANGSIHLGH. Zn(2+) contacts are provided by cysteine 146, cysteine 149, cysteine 159, and cysteine 162. Positions 332-336 match the 'KMSKS' region motif; the sequence is KMSKS. Position 335 (lysine 335) interacts with ATP. The region spanning 573-675 is the tRNA-binding domain; that stretch reads DFAKVDMRIA…SGAQPGMQVK (103 aa).

Belongs to the class-I aminoacyl-tRNA synthetase family. MetG type 1 subfamily. In terms of assembly, homodimer. Zn(2+) serves as cofactor.

It is found in the cytoplasm. The catalysed reaction is tRNA(Met) + L-methionine + ATP = L-methionyl-tRNA(Met) + AMP + diphosphate. Its function is as follows. Is required not only for elongation of protein synthesis but also for the initiation of all mRNA translation through initiator tRNA(fMet) aminoacylation. This is Methionine--tRNA ligase from Yersinia pseudotuberculosis serotype I (strain IP32953).